A 281-amino-acid chain; its full sequence is 2-dehydro-3-deoxyphosphooctonate aldolase (281 aa).

Belongs to the KdsA family.

It is found in the cytoplasm. The enzyme catalyses D-arabinose 5-phosphate + phosphoenolpyruvate + H2O = 3-deoxy-alpha-D-manno-2-octulosonate-8-phosphate + phosphate. It participates in carbohydrate biosynthesis; 3-deoxy-D-manno-octulosonate biosynthesis; 3-deoxy-D-manno-octulosonate from D-ribulose 5-phosphate: step 2/3. Its pathway is bacterial outer membrane biogenesis; lipopolysaccharide biosynthesis. The chain is 2-dehydro-3-deoxyphosphooctonate aldolase from Pseudomonas putida (strain GB-1).